We begin with the raw amino-acid sequence, 242 residues long: uncharacterized protein (242 aa).

Residues 8 to 76 enclose the HTH gntR-type domain; that stretch reads TPLYIQLKQI…QGKGTFVKSP (69 aa). Residues 36–55 constitute a DNA-binding region (H-T-H motif); that stretch reads ENELCTKYNVSRITVRKAIL.

This is an uncharacterized protein from Bacillus subtilis (strain 168).